The following is a 353-amino-acid chain: 2-oxoglutarate-Fe(II) type oxidoreductase ppzD (353 aa).

Positions 181–292 constitute a Fe2OG dioxygenase domain; that stretch reads NTSELRLNHY…RYSVAYFGKP (112 aa). The Fe cation site is built by His208, Asp210, and His268. Residue Arg283 coordinates 2-oxoglutarate.

The protein belongs to the iron/ascorbate-dependent oxidoreductase family. The cofactor is Fe(2+).

It catalyses the reaction L-proline + 2-oxoglutarate + O2 = trans-4-hydroxy-L-proline + succinate + CO2. The enzyme catalyses L-proline + 2-oxoglutarate + O2 = trans-3-hydroxy-L-proline + succinate + CO2. It carries out the reaction D-proline + 2-oxoglutarate + O2 = cis-4-hydroxy-D-proline + succinate + CO2. Its pathway is secondary metabolite biosynthesis. 2-oxoglutarate-Fe(II) type oxidoreductase; part of the gene cluster that mediates the biosynthesis of pyrrolopyrazines, secondary metabolites showing insecticidal activity. Within the pathway, ppzD converts L-proline into trans-4-hydroxy-L-proline as a major product, yielding a key precursor for peramine biosynthesis. PpzD is also able to convert L-proline into trans-3-hydroxy-L-proline. The single multifunctional NRPS ppzA is sufficient to produce peramine via condensation of 1-pyrroline-5-carboxylate and arginine, N-methylation of the alpha-amino group of arginine and reduction of the thioester and the cyclization to form an iminium ion resulting in release from the peptide synthetase. Deprotonation of this intermediate and oxidation of the pyrroline ring would give rise to peramine. In Epichloe species that produce only peramine, the peramine synthetase gene is not localized in a gene cluster, in contrast to Metarhizium species that contain additional pyrrolopyrazine biosynthesis genes. The 2-oxoglutarate-Fe(II) type oxidoreductase ppzC hydroxylates peramine to yield the newly identified compound 8-hydroxyperamine whereas ppzD converts L-proline into trans-4-hydroxy-L-proline, a precursor of peramine biosynthesis. The sequence is that of 2-oxoglutarate-Fe(II) type oxidoreductase ppzD from Metarhizium rileyi (strain RCEF 4871) (Nomuraea rileyi).